Here is a 212-residue protein sequence, read N- to C-terminus: GTP-binding protein EngB (212 aa).

The EngB-type G domain occupies 36–212 (TAPEVAFAGR…LRAAVYDAII (177 aa)). GTP contacts are provided by residues 44-51 (GRSNVGKS), 71-75 (GRTQE), 91-94 (DMPG), 158-161 (TKSD), and 192-194 (TSS). Mg(2+)-binding residues include Ser51 and Thr73.

The protein belongs to the TRAFAC class TrmE-Era-EngA-EngB-Septin-like GTPase superfamily. EngB GTPase family. Mg(2+) is required as a cofactor.

Necessary for normal cell division and for the maintenance of normal septation. This is GTP-binding protein EngB from Zymomonas mobilis subsp. mobilis (strain ATCC 31821 / ZM4 / CP4).